The chain runs to 303 residues: Probable WRKY transcription factor 30 (303 aa).

A disordered region spans residues 65-92; the sequence is DQVSQGGGSPKSDDSDQEPLVIKSSKKS. Residues 107 to 175 constitute a DNA-binding region (WRKY); that stretch reads GVDRTLDDGF…YRGIHSCSQA (69 aa). A compositionally biased stretch (low complexity) spans 266 to 278; that stretch reads SGSASHSASNSPS. The tract at residues 266 to 291 is disordered; sequence SGSASHSASNSPSTVPLESPFESYDP.

Belongs to the WRKY group III family. As to quaternary structure, interacts with WRKY53, WRKY54 and WRKY70.

The protein localises to the nucleus. Its function is as follows. Transcription factor. Interacts specifically with the W box (5'-(T)TGAC[CT]-3'), a frequently occurring elicitor-responsive cis-acting element. This chain is Probable WRKY transcription factor 30, found in Arabidopsis thaliana (Mouse-ear cress).